The primary structure comprises 463 residues: Succinate--CoA ligase [ADP-forming] subunit beta, mitochondrial (463 aa).

Residues methionine 1–leucine 53 constitute a mitochondrion transit peptide. One can recognise an ATP-grasp domain in the interval methionine 61–isoleucine 288. Residue lysine 78 is modified to N6-acetyllysine. The residue at position 84 (tyrosine 84) is a Phosphotyrosine. Residue lysine 88 is modified to N6-acetyllysine; alternate. Lysine 88 bears the N6-succinyllysine; alternate mark. Residues lysine 98 and glycine 105–glycine 107 contribute to the ATP site. An N6-acetyllysine mark is found at lysine 129, lysine 139, lysine 143, and lysine 216. Positions 258 and 272 each coordinate Mg(2+). The residue at position 279 (serine 279) is a Phosphoserine. Asparagine 323 is a substrate binding site. Position 341 is a phosphothreonine (threonine 341). Lysine 368 is subject to N6-acetyllysine. Glycine 380 to methionine 382 provides a ligand contact to substrate.

This sequence belongs to the succinate/malate CoA ligase beta subunit family. ATP-specific subunit beta subfamily. In terms of assembly, heterodimer of an alpha and a beta subunit. The beta subunit determines specificity for ATP. Interacts with ALAS2. Mg(2+) is required as a cofactor.

It is found in the mitochondrion. The catalysed reaction is succinate + ATP + CoA = succinyl-CoA + ADP + phosphate. The protein operates within carbohydrate metabolism; tricarboxylic acid cycle; succinate from succinyl-CoA (ligase route): step 1/1. ATP-specific succinyl-CoA synthetase functions in the citric acid cycle (TCA), coupling the hydrolysis of succinyl-CoA to the synthesis of ATP and thus represents the only step of substrate-level phosphorylation in the TCA. The beta subunit provides nucleotide specificity of the enzyme and binds the substrate succinate, while the binding sites for coenzyme A and phosphate are found in the alpha subunit. In Macaca fascicularis (Crab-eating macaque), this protein is Succinate--CoA ligase [ADP-forming] subunit beta, mitochondrial.